The primary structure comprises 102 residues: uncharacterized protein (102 aa).

A helical membrane pass occupies residues 77–96; the sequence is FFSACVAKSYSSFFISICIL.

Its subcellular location is the membrane. This is an uncharacterized protein from Saccharomyces cerevisiae (strain ATCC 204508 / S288c) (Baker's yeast).